The chain runs to 210 residues: HTH-type transcriptional repressor ComR (210 aa).

The region spanning 18–78 (VFDRDAALDK…AVLDRYIDRF (61 aa)) is the HTH tetR-type domain. Residues 41-60 (SLADLVEATGAKAPTLYAEF) constitute a DNA-binding region (H-T-H motif).

Its activity is regulated as follows. Binding to the promoter region of BhsA/ComC is released in the presence of copper. Represses expression of BhsA/ComC by binding to its promoter region in the absence of copper. This Escherichia coli (strain K12) protein is HTH-type transcriptional repressor ComR (comR).